The chain runs to 369 residues: MPNTALSTAELTDDQVHDILTTALARILRRIDLTQQEMRQIMTIIMDGRCPDAMLGALLTGLNMKSESIDEITASASVMLDFAKKIEPKNRTNMVDIVGTGGDGSNLFNVSTASAFVAAAAGATVAKHGNRGVSSKSGSSDLLEQAGLNLNITPEQTRECIETQGIGFLFAPNHHTAMKHAIPVRRALKVRTIFNILGPLTNPAGVKNLVVGVFTDNMCEPLAHVFKNLGAKHVMVVGSKDRLDEISLATSTKVAELKDGEVTVYDIFPEDAGIDSQTLVGLDVNSSEQSLQLIQAALSGKETNDFGIAQNKVNKARDMIALNAGAAIYVAGLASNFPNGVNQAQNILQSGKALQKMQALAEYTQTFDR.

Residues Gly-99, 102–103 (GD), 109–112 (NVST), 127–135 (KHGNRGVSS), and Ser-139 contribute to the 5-phospho-alpha-D-ribose 1-diphosphate site. Position 99 (Gly-99) interacts with anthranilate. Residue Ser-111 coordinates Mg(2+). Asn-130 contributes to the anthranilate binding site. Position 185 (Arg-185) interacts with anthranilate. Mg(2+) is bound by residues Asp-244 and Glu-245.

The protein belongs to the anthranilate phosphoribosyltransferase family. As to quaternary structure, homodimer. Requires Mg(2+) as cofactor.

The enzyme catalyses N-(5-phospho-beta-D-ribosyl)anthranilate + diphosphate = 5-phospho-alpha-D-ribose 1-diphosphate + anthranilate. Its pathway is amino-acid biosynthesis; L-tryptophan biosynthesis; L-tryptophan from chorismate: step 2/5. Its function is as follows. Catalyzes the transfer of the phosphoribosyl group of 5-phosphorylribose-1-pyrophosphate (PRPP) to anthranilate to yield N-(5'-phosphoribosyl)-anthranilate (PRA). In Psychrobacter sp. (strain PRwf-1), this protein is Anthranilate phosphoribosyltransferase.